The sequence spans 129 residues: NADH-quinone oxidoreductase subunit A (129 aa).

Helical transmembrane passes span 14 to 34, 67 to 87, and 95 to 115; these read LAIH…VAAL, FLIA…FAWA, and WFGL…LVYL.

It belongs to the complex I subunit 3 family. NDH-1 is composed of 14 different subunits. Subunits NuoA, H, J, K, L, M, N constitute the membrane sector of the complex.

It localises to the cell inner membrane. The enzyme catalyses a quinone + NADH + 5 H(+)(in) = a quinol + NAD(+) + 4 H(+)(out). Functionally, NDH-1 shuttles electrons from NADH, via FMN and iron-sulfur (Fe-S) centers, to quinones in the respiratory chain. The immediate electron acceptor for the enzyme in this species is believed to be ubiquinone. Couples the redox reaction to proton translocation (for every two electrons transferred, four hydrogen ions are translocated across the cytoplasmic membrane), and thus conserves the redox energy in a proton gradient. This chain is NADH-quinone oxidoreductase subunit A, found in Rhodopseudomonas palustris (strain HaA2).